Reading from the N-terminus, the 287-residue chain is Bifunctional protein FolD (287 aa).

NADP(+)-binding positions include 168–170 (GRS), serine 193, and isoleucine 234.

The protein belongs to the tetrahydrofolate dehydrogenase/cyclohydrolase family. As to quaternary structure, homodimer.

It catalyses the reaction (6R)-5,10-methylene-5,6,7,8-tetrahydrofolate + NADP(+) = (6R)-5,10-methenyltetrahydrofolate + NADPH. The catalysed reaction is (6R)-5,10-methenyltetrahydrofolate + H2O = (6R)-10-formyltetrahydrofolate + H(+). Its pathway is one-carbon metabolism; tetrahydrofolate interconversion. Its function is as follows. Catalyzes the oxidation of 5,10-methylenetetrahydrofolate to 5,10-methenyltetrahydrofolate and then the hydrolysis of 5,10-methenyltetrahydrofolate to 10-formyltetrahydrofolate. The polypeptide is Bifunctional protein FolD (Clostridioides difficile (strain 630) (Peptoclostridium difficile)).